Reading from the N-terminus, the 705-residue chain is Tyrosine decarboxylase (705 aa).

A compositionally biased stretch (polar residues) spans 22–32 (RIRNSLSPSRP). Residues 22-81 (RIRNSLSPSRPSMSEATATGSSSSSRASTTIPSTPNMDVTPTVEDPRQNDNNASGMTRDE) are disordered. Over residues 33–55 (SMSEATATGSSSSSRASTTIPST) the composition is skewed to low complexity. The residue at position 380 (lysine 380) is an N6-(pyridoxal phosphate)lysine. A coiled-coil region spans residues 554–620 (VKAVIAEEDE…AQKQHESLAK (67 aa)). Residues 667–678 (HSQRPNRLSQSP) show a composition bias toward polar residues. Positions 667–687 (HSQRPNRLSQSPGSAGSAFFD) are disordered.

The protein belongs to the group II decarboxylase family. Requires pyridoxal 5'-phosphate as cofactor. In terms of tissue distribution, expressed in the gonadal sheath projections in between the oocytes, in head RIM motor neurons and RIC interneurons.

The protein resides in the cytoplasm. The protein localises to the cell projection. It localises to the axon. Its subcellular location is the perikaryon. The enzyme catalyses L-tyrosine + H(+) = tyramine + CO2. Functionally, required for the decarboxylation of tyrosine to tyramine, a precursor of octopamine but probably also itself a neurotransmitter. Involved in the regulation of egg laying, which is inhibited by tyramine. Also involved in controlling locomotion and head movements. Due to its involvement in octopamine biosynthesis, also required for crtc-1-dependent regulation of AMPK-mediated longevity which requires octopamine signaling. In Caenorhabditis elegans, this protein is Tyrosine decarboxylase.